The sequence spans 406 residues: LIM/homeobox protein Lhx1 (406 aa).

LIM zinc-binding domains follow at residues 4-54 (CAGC…CKND) and 63-117 (CAGC…CKED). Positions 125–136 (AKENSLHSATTG) are enriched in polar residues. Disordered stretches follow at residues 125–187 (AKEN…RTTI) and 296–372 (FPQG…SAEV). Over residues 137–148 (SDPSLSPDSQDP) the composition is skewed to low complexity. Basic and acidic residues predominate over residues 151 to 167 (DDAKDSESANVSDKETG). Residues 180–239 (RRGPRTTIKAKQLETLKAAFAATPKPTRHIREQLAQETGLNMRVIQVWFQNRRSKERRMK) constitute a DNA-binding region (homeobox).

Its subcellular location is the nucleus. In terms of biological role, transcriptional factor that defines subclasses of motoneurons that segregate into columns in the spinal cord and select distinct axon pathways. Acts in conjunction with ISL-2. The polypeptide is LIM/homeobox protein Lhx1 (LHX1) (Gallus gallus (Chicken)).